Here is an 831-residue protein sequence, read N- to C-terminus: Cation/H(+) symporter 13 (831 aa).

The next 12 helical transmembrane spans lie at 50 to 70 (YALPLLLLQMSVIIVTSRLIF), 89 to 109 (VVLGPSFLGHNVIYMNMFLPA), 112 to 132 (KIIIQTLSNVGFVIHLFLLGL), 147 to 167 (ILIGTASYAFPFSLGNLTIMF), 214 to 234 (LATHCSMVCEVCSWFVALAFN), 250 to 270 (MIIGLLLVIYFVFRPIIVWLT), 282 to 302 (VVPFFPVLLLLSIASLSGEAM), 303 to 323 (GVHAAFGAFWLGVSLPDGPPL), 334 to 354 (FASNLFLPCFIAISGLQTNFF), 364 to 384 (VVMIEIILLITYGCKFLGTAA), 397 to 417 (LCLAFLMCCQGIIEVYTTIVW), and 430 to 450 (LVIITILFVTGISRFLVVYLY).

The protein belongs to the monovalent cation:proton antiporter 2 (CPA2) transporter (TC 2.A.37) family. CHX (TC 2.A.37.4) subfamily. In terms of tissue distribution, preferentially expressed in pollen before and after germination. Detected in pollen grains within anthers of the flower buds or in pollen on fully open flowers and on the stigma, and in pollen tubes growing in the style. Weakly expressed in roots.

The protein resides in the cell membrane. High-affinity potassium transporter that plays a role in K(+) acquisition. May operate as a K(+)/H(+) symporter. This is Cation/H(+) symporter 13 (CHX13) from Arabidopsis thaliana (Mouse-ear cress).